We begin with the raw amino-acid sequence, 348 residues long: tRNA-specific 2-thiouridylase MnmA (348 aa).

ATP-binding positions include 8–15 (LLSGGVDS) and Met34. Cys105 functions as the Nucleophile in the catalytic mechanism. A disulfide bond links Cys105 and Cys197. Gly129 is an ATP binding site. Residues 147-149 (KDQ) form an interaction with tRNA region. The Cysteine persulfide intermediate role is filled by Cys197.

Belongs to the MnmA/TRMU family.

It is found in the cytoplasm. It catalyses the reaction S-sulfanyl-L-cysteinyl-[protein] + uridine(34) in tRNA + AH2 + ATP = 2-thiouridine(34) in tRNA + L-cysteinyl-[protein] + A + AMP + diphosphate + H(+). Its function is as follows. Catalyzes the 2-thiolation of uridine at the wobble position (U34) of tRNA, leading to the formation of s(2)U34. In Fervidobacterium nodosum (strain ATCC 35602 / DSM 5306 / Rt17-B1), this protein is tRNA-specific 2-thiouridylase MnmA.